The following is a 245-amino-acid chain: Transcriptional activator protein ExpR (245 aa).

One can recognise an HTH luxR-type domain in the interval 173–238 (RSNDKDIFSQ…HAIRLGIELQ (66 aa)). The H-T-H motif DNA-binding region spans 197-216 (YQEIALILDIKTGTVKFHIG).

The protein belongs to the autoinducer-regulated transcriptional regulatory protein family.

In terms of biological role, functions as an OHLL responsive transcriptional regulator that acts in virulence (soft rot disease) through the activation of genes for plant tissue macerating enzymes. The sequence is that of Transcriptional activator protein ExpR (expR) from Pectobacterium parmentieri.